The sequence spans 242 residues: DNA-directed RNA polymerase III subunit rpc5 (242 aa).

Disordered regions lie at residues 1-22 and 153-172; these read MSFS…TEEQ and LKAA…PRGP. The segment covering 155–172 has biased composition (low complexity); that stretch reads AAAGPSNSSSGTSTPRGP.

As to quaternary structure, component of the RNA polymerase III (Pol III) complex consisting of 17 subunits.

It is found in the cytoplasm. The protein resides in the nucleus. In terms of biological role, DNA-dependent RNA polymerase catalyzes the transcription of DNA into RNA using the four ribonucleoside triphosphates as substrates. Specific peripheric component of RNA polymerase III which synthesizes small RNAs, such as 5S rRNA and tRNAs. The RPC53/RPC4-RPC37/RPC5 subcomplex is required for terminator recognition and reinitiation. The protein is DNA-directed RNA polymerase III subunit rpc5 (rpc37) of Schizosaccharomyces pombe (strain 972 / ATCC 24843) (Fission yeast).